Reading from the N-terminus, the 72-residue chain is uncharacterized protein (72 aa).

The first 17 residues, 1-17 (MSLGLAIAVGIVLGVVA), serve as a signal peptide directing secretion.

This is an uncharacterized protein from Schizosaccharomyces pombe (strain 972 / ATCC 24843) (Fission yeast).